Here is a 290-residue protein sequence, read N- to C-terminus: Mitochondrial dicarboxylate carrier (290 aa).

Solcar repeat units follow at residues 6-90 (TKRL…VKKQ), 101-188 (QKAL…IKQT), and 197-281 (DNLQ…LRLK). The next 3 membrane-spanning stretches (helical) occupy residues 12–32 (WYFG…LDLL), 65–84 (GVSA…FGIY), and 103–123 (ALLA…GDLV). N6-acetyllysine is present on lysine 159. The next 3 helical transmembrane spans lie at 163 to 182 (GATM…LSFY), 203 to 223 (FASS…LDVM), and 256 to 276 (GFIP…IFFE).

This sequence belongs to the mitochondrial carrier (TC 2.A.29) family.

It is found in the mitochondrion inner membrane. It carries out the reaction (S)-malate(in) + phosphate(out) = (S)-malate(out) + phosphate(in). The catalysed reaction is malonate(out) + (S)-malate(in) = malonate(in) + (S)-malate(out). The enzyme catalyses (S)-malate(in) + succinate(out) = (S)-malate(out) + succinate(in). It catalyses the reaction (S)-malate(in) + sulfate(out) = (S)-malate(out) + sulfate(in). It carries out the reaction 2 thiosulfate(out) + (S)-malate(in) = 2 thiosulfate(in) + (S)-malate(out). The catalysed reaction is malonate(out) + phosphate(in) = malonate(in) + phosphate(out). The enzyme catalyses succinate(out) + phosphate(in) = succinate(in) + phosphate(out). It catalyses the reaction sulfate(out) + phosphate(in) = sulfate(in) + phosphate(out). It carries out the reaction 2 thiosulfate(out) + phosphate(in) = 2 thiosulfate(in) + phosphate(out). The catalysed reaction is malonate(out) + succinate(in) = malonate(in) + succinate(out). Functionally, catalyzes the electroneutral exchange or flux of physiologically important metabolites such as dicarboxylates (malonate, malate, succinate), inorganic sulfur-containing anions, and phosphate, across mitochondrial inner membrane. Plays an important role in gluconeogenesis, fatty acid metabolism, urea synthesis, and sulfur metabolism, by supplying the substrates for the different metabolic processes. In Caenorhabditis elegans, this protein is Mitochondrial dicarboxylate carrier.